The following is a 362-amino-acid chain: N5-carboxyaminoimidazole ribonucleotide synthase (362 aa).

ATP contacts are provided by residues arginine 108, lysine 148, 153-159 (GYDGKGQ), 185-188 (EGFV), glutamate 193, histidine 216, and 270-271 (NE). The ATP-grasp domain maps to 112 to 300 (KQFLNESGIE…QFEQHIRAVA (189 aa)).

This sequence belongs to the PurK/PurT family. As to quaternary structure, homodimer.

It catalyses the reaction 5-amino-1-(5-phospho-beta-D-ribosyl)imidazole + hydrogencarbonate + ATP = 5-carboxyamino-1-(5-phospho-D-ribosyl)imidazole + ADP + phosphate + 2 H(+). It participates in purine metabolism; IMP biosynthesis via de novo pathway; 5-amino-1-(5-phospho-D-ribosyl)imidazole-4-carboxylate from 5-amino-1-(5-phospho-D-ribosyl)imidazole (N5-CAIR route): step 1/2. Its function is as follows. Catalyzes the ATP-dependent conversion of 5-aminoimidazole ribonucleotide (AIR) and HCO(3)(-) to N5-carboxyaminoimidazole ribonucleotide (N5-CAIR). The sequence is that of N5-carboxyaminoimidazole ribonucleotide synthase from Brucella melitensis biotype 1 (strain ATCC 23456 / CCUG 17765 / NCTC 10094 / 16M).